The following is a 264-amino-acid chain: Zearalenone hydrolase (264 aa).

The 181-residue stretch at 27–207 (VLVPDGLGEC…KDLEALRGKP (181 aa)) folds into the AB hydrolase-1 domain. Residues G32, S102, and S103 each coordinate zearalenone. S102 is an active-site residue. E126 is a catalytic residue. Zearalenone-binding residues include W183, Y187, S220, and H242. H242 is an active-site residue.

The protein belongs to the AB hydrolase superfamily. Hydrolase RutD family. Homodimer.

The enzyme catalyses zearalenone + H2O = hydrolyzed zearalenone + H(+). Functionally, lactonohydrolase that specifically hydrolyzes and deactivates the mycotoxin zearalenone (ZEN) and its zearalenol (ZOL) derivatives. ZHD101 prefers ZEN to ZOL as its substrate, but ZOL, especially the alpha-form, shows higher estrogenic toxicity than ZEN. This Bionectria ochroleuca (Gliocladium roseum) protein is Zearalenone hydrolase.